The primary structure comprises 528 residues: T-complex protein 1 subunit delta (528 aa).

Belongs to the TCP-1 chaperonin family. As to quaternary structure, heterooligomeric complex of about 850 to 900 kDa that forms two stacked rings, 12 to 16 nm in diameter.

It localises to the cytoplasm. In terms of biological role, molecular chaperone; assists the folding of proteins upon ATP hydrolysis. Known to play a role, in vitro, in the folding of actin and tubulin. In yeast may play a role in mitotic spindle formation. The polypeptide is T-complex protein 1 subunit delta (CCT4) (Saccharomyces cerevisiae (strain ATCC 204508 / S288c) (Baker's yeast)).